A 527-amino-acid polypeptide reads, in one-letter code: METNTVQKLTDILGATKVYHNLPVANLVEMAVKRGEGILTDKGALNALTGKFTGRSPKDKFVVDEASVHDKINWGPVNQPISTEKFQALQQDVLQYLQSKDELFVFDGFAGADTTYRLPIRVVNEFAWHNLFARQLFIRPSEEELAAHESEFTVIYAPNFKANPAVHGTNSETFIVLSFEQKTVLIGGTEYAGEMKKSIFSVMNMLLPERNVLPMHCSANVGKDGDVALFFGLSGTGKTTLSADPDRFLIGDDEHGWSDNGVFNIEGGCYAKCVKLSEEGEPQIWKAIQFGTVLENVDVNEATRVADYDSTKYTENTRAAYPVEAIPGAVIPGVGGQPNVIVFLTADSFGVLPPISKLNKEQAMYHFLSGYTSKMAGTERGVTAPQTEFSTCFGSPFLPLHPVVYAEMLGKKIDERKVQVYLVNTGWTGGPVGVGQRMKLSYTRAMVTAALNGELEKVDYVADEIFGVQVPTSCPNVPAEVLQPRNTWANKEDYDKQAADLAARFIENFEKKFPNAADIANAGPKVK.

Substrate contacts are provided by arginine 55, tyrosine 191, and lysine 197. ATP contacts are provided by residues lysine 197, histidine 216, and 232–240 (GLSGTGKTT). The Mn(2+) site is built by lysine 197 and histidine 216. Residue aspartate 253 coordinates Mn(2+). Residues glutamate 281, arginine 318, and threonine 443 each coordinate ATP. Arginine 318 is a binding site for substrate.

The protein belongs to the phosphoenolpyruvate carboxykinase (ATP) family. Mn(2+) serves as cofactor.

It is found in the cytoplasm. The catalysed reaction is oxaloacetate + ATP = phosphoenolpyruvate + ADP + CO2. It functions in the pathway carbohydrate biosynthesis; gluconeogenesis. Its function is as follows. Involved in the gluconeogenesis. Catalyzes the conversion of oxaloacetate (OAA) to phosphoenolpyruvate (PEP) through direct phosphoryl transfer between the nucleoside triphosphate and OAA. This is Phosphoenolpyruvate carboxykinase (ATP) from Brevibacillus brevis (strain 47 / JCM 6285 / NBRC 100599).